We begin with the raw amino-acid sequence, 276 residues long: Large ribosomal subunit protein uL2c (276 aa).

Residues 225-256 (NPVDHPHGGGEGRSPIGRPKPVSPWGKTALGA) are disordered.

It belongs to the universal ribosomal protein uL2 family. In terms of assembly, part of the 50S ribosomal subunit.

The protein resides in the plastid. The protein localises to the chloroplast. This chain is Large ribosomal subunit protein uL2c (rpl2), found in Mesostigma viride (Green alga).